The following is a 375-amino-acid chain: Fluoride export protein 2 (375 aa).

The Cytoplasmic segment spans residues 1–11 (MIFNPVISNHK). Residues 12 to 32 (LSHYIHVFCTFTTFCILGTET) traverse the membrane as a helical segment. Residues 33-34 (RQ) are Extracellular-facing. Residues 35–55 (AITALSTYTPAFVTAPTVLWS) traverse the membrane as a helical segment. The Cytoplasmic portion of the chain corresponds to 56–79 (NCSSCMLMGIMQSLNAYTWMKDHQ). The helical transmembrane segment at 80 to 100 (VLFLGVTTGYCGALSSFSSML) threads the bilayer. Over 101 to 127 (LEMFEHSTNLTNGNIANHTKLPNRAYG) the chain is Extracellular. Asparagine 109 and asparagine 117 each carry an N-linked (GlcNAc...) asparagine glycan. A helical membrane pass occupies residues 128 to 148 (IMEFLSVLLVHLMVSMGSLIF). Over 149–213 (GRQLGKEVIV…FKKFFDVVDK (65 aa)) the chain is Cytoplasmic. A helical transmembrane segment spans residues 214 to 234 (LAYALAFPLIILFVVLCAYYE). Residue asparagine 235 is glycosylated (N-linked (GlcNAc...) asparagine). At 235–241 (NYSRGKW) the chain is on the extracellular side. Residues 242–262 (TLPCLFGIFAGFLRYWLAEMF) traverse the membrane as a helical segment. Residues 263–268 (NKTNKK) are Cytoplasmic-facing. Residues 269-289 (FPLGTFLANVFATLLIGIFTM) form a helical membrane-spanning segment. Residues 290 to 310 (VQRGKKHFSTDIPIVNSLNSC) are Extracellular-facing. A helical transmembrane segment spans residues 311–331 (HIVSALISGFCGTLSTISTFI). Over 332–338 (NEGYKLS) the chain is Cytoplasmic. Residues 339 to 359 (FINMLIYYTVSIGISYCLLVI) traverse the membrane as a helical segment. The Extracellular segment spans residues 360–375 (TLGSYAWTRGLTNPIC).

This sequence belongs to the fluoride channel Fluc/FEX (TC 1.A.43) family.

It localises to the cell membrane. It catalyses the reaction fluoride(in) = fluoride(out). Functionally, fluoride channel required for the rapid expulsion of cytoplasmic fluoride. This is Fluoride export protein 2 from Saccharomyces cerevisiae (strain ATCC 204508 / S288c) (Baker's yeast).